A 321-amino-acid chain; its full sequence is Large ribosomal subunit protein uL10 (321 aa).

A disordered region spans residues 284-321 (SAGTAPTGGGAAAAAVEEKKEEPEEESDDDIGFSLFDD). A compositionally biased stretch (acidic residues) spans 306–321 (PEEESDDDIGFSLFDD).

It belongs to the universal ribosomal protein uL10 family. In terms of assembly, P0 forms a pentameric complex by interaction with dimers of P1 and P2. Post-translationally, phosphorylated.

Ribosomal protein P0 is the functional equivalent of E.coli protein L10. This Oxybasis rubra (Red goosefoot) protein is Large ribosomal subunit protein uL10.